A 2570-amino-acid polypeptide reads, in one-letter code: Highly reducing polyketide synthase tstA (2570 aa).

One can recognise a Ketosynthase family 3 (KS3) domain in the interval 16-443; it reads AMPIAVVGIG…GANAHVVLEN (428 aa). Residues Cys191, His326, and His366 each act as for beta-ketoacyl synthase activity in the active site. A disordered region spans residues 458 to 478; the sequence is HTRKSATESSGTSTPSNPGPH. Residues 464 to 478 show a composition bias toward low complexity; the sequence is TESSGTSTPSNPGPH. The 332-residue stretch at 567-898 folds into the Malonyl-CoA:ACP transacylase (MAT) domain; sequence FVFTGQGAQW…YSALVRNKNA (332 aa). The segment at 965–1103 is N-terminal hotdog fold; it reads TDLLGVLERN…GLVSVVAPQK (139 aa). Positions 965–1293 constitute a PKS/mFAS DH domain; the sequence is TDLLGVLERN…CATLAREGAD (329 aa). The active-site Proton acceptor; for dehydratase activity is the His997. The tract at residues 1133–1293 is C-terminal hotdog fold; that stretch reads RRNINVPQFY…CATLAREGAD (161 aa). The active-site Proton donor; for dehydratase activity is Asp1198. Residues 1343–1645 form a methyltransferase (CMeT) domain region; sequence LERAAYYMLK…IATSINSNNY (303 aa). The 313-residue stretch at 1866–2178 folds into the Enoyl reductase (ER) domain; it reads GLLDSIFWTD…TGGHMGKLVG (313 aa). In terms of domain architecture, Ketoreductase (KR) spans 2202–2379; that stretch reads ASYVLIGGLG…ATTIDLGAIS (178 aa). The 78-residue stretch at 2482–2559 folds into the Carrier domain; the sequence is DASELILGAL…HLATKIAQRS (78 aa). Position 2519 is an O-(pantetheine 4'-phosphoryl)serine (Ser2519).

The cofactor is pantetheine 4'-phosphate.

The protein operates within secondary metabolite biosynthesis. In terms of biological role, highly reducing polyketide synthase; part of the gene cluster that mediates the biosynthesis of the antihypercholesterolemic agents phomoidrides which are dimeric anhydrides. The pathway begins with the highly reducing polyketide synthase tstA that catalyzes the formation of a C12-fatty acyl-ACP, starting from one acetate and 5 malonate units. The hydrolase tstM is involved in the release of the C12-fatty acyl chain from tstA. The alkylcitrate synthase (ACS) tstJ and the alkylcitrate dehydratase (ACDH) tstI then give rise to decarboxylated monomeric anhydrides by coupling the C12-fatty acyl chain with oxalacetic acid. The cyclase tstC is responsible for the dimerization of the monomeric anhydrides which leads to the production of prephomoidride that contains the characteristic bicyclo[4.3.1]deca-1,6-diene system of phomoidrides. Iterative oxidation catalyzed by the alpha-ketoglutarate-dependent dioxygenase tstK produced then phomoidride A. Finally, the methyltransferase tstE converts phomoidride A to phomoidride B via an acetalization reaction. The phosphatidylethanolamine-binding protein tstB and tstN are not essential for dimerization and their functions have still to be determined. The polypeptide is Highly reducing polyketide synthase tstA (Talaromyces stipitatus (strain ATCC 10500 / CBS 375.48 / QM 6759 / NRRL 1006) (Penicillium stipitatum)).